Reading from the N-terminus, the 135-residue chain is Succinate dehydrogenase assembly factor 3, mitochondrial (135 aa).

A mitochondrion-targeting transit peptide spans Met-1–Pro-12.

It belongs to the complex I LYR family. SDHAF3 subfamily. As to quaternary structure, interacts with the iron-sulfur protein subunit within the SDH catalytic dimer.

Its subcellular location is the mitochondrion matrix. Its function is as follows. Plays an essential role in the assembly of succinate dehydrogenase (SDH), an enzyme complex (also referred to as respiratory complex II) that is a component of both the tricarboxylic acid (TCA) cycle and the mitochondrial electron transport chain, and which couples the oxidation of succinate to fumarate with the reduction of ubiquinone (coenzyme Q) to ubiquinol. Promotes maturation of the iron-sulfur protein subunit of the SDH catalytic dimer, protecting it from the deleterious effects of oxidants. May act together with SDHAF1. In Emericella nidulans (strain FGSC A4 / ATCC 38163 / CBS 112.46 / NRRL 194 / M139) (Aspergillus nidulans), this protein is Succinate dehydrogenase assembly factor 3, mitochondrial.